The sequence spans 189 residues: GTP cyclohydrolase 1 (189 aa).

Cys76, His79, and Cys149 together coordinate Zn(2+).

Belongs to the GTP cyclohydrolase I family. Homomer.

It catalyses the reaction GTP + H2O = 7,8-dihydroneopterin 3'-triphosphate + formate + H(+). It functions in the pathway cofactor biosynthesis; 7,8-dihydroneopterin triphosphate biosynthesis; 7,8-dihydroneopterin triphosphate from GTP: step 1/1. This is GTP cyclohydrolase 1 from Dehalococcoides mccartyi (strain ATCC BAA-2100 / JCM 16839 / KCTC 5957 / BAV1).